The primary structure comprises 404 residues: Phosphopentomutase (404 aa).

Residues D10, D303, H308, D344, H345, and H356 each contribute to the Mn(2+) site.

This sequence belongs to the phosphopentomutase family. Requires Mn(2+) as cofactor.

The protein localises to the cytoplasm. The catalysed reaction is 2-deoxy-alpha-D-ribose 1-phosphate = 2-deoxy-D-ribose 5-phosphate. It catalyses the reaction alpha-D-ribose 1-phosphate = D-ribose 5-phosphate. It functions in the pathway carbohydrate degradation; 2-deoxy-D-ribose 1-phosphate degradation; D-glyceraldehyde 3-phosphate and acetaldehyde from 2-deoxy-alpha-D-ribose 1-phosphate: step 1/2. Isomerase that catalyzes the conversion of deoxy-ribose 1-phosphate (dRib-1-P) and ribose 1-phosphate (Rib-1-P) to deoxy-ribose 5-phosphate (dRib-5-P) and ribose 5-phosphate (Rib-5-P), respectively. The sequence is that of Phosphopentomutase from Shewanella baltica (strain OS185).